A 329-amino-acid polypeptide reads, in one-letter code: Phosphate acyltransferase (329 aa).

The protein belongs to the PlsX family. As to quaternary structure, homodimer. Probably interacts with PlsY.

It localises to the cytoplasm. It carries out the reaction a fatty acyl-[ACP] + phosphate = an acyl phosphate + holo-[ACP]. The protein operates within lipid metabolism; phospholipid metabolism. Its function is as follows. Catalyzes the reversible formation of acyl-phosphate (acyl-PO(4)) from acyl-[acyl-carrier-protein] (acyl-ACP). This enzyme utilizes acyl-ACP as fatty acyl donor, but not acyl-CoA. The sequence is that of Phosphate acyltransferase from Exiguobacterium sp. (strain ATCC BAA-1283 / AT1b).